We begin with the raw amino-acid sequence, 443 residues long: MFLAQEIIRKKRNGQALTAAEIQFFVNGITTNSVSEGQIAAFGMAVYFNDMNMDERIALTIGMRDSGTVLNWDSLGLNGPVIDKHSTGGVGDVISLMLGPMAAACGGYVPMISGRGLGHTGGTLDKFDAILGYQTEPSSELFRKVVKEAGVAIIGQTGDLVPADKRFYSIRDNTATVESISLITASILSKKLAAGLDALVMDVKVGSGAFMPSYAASEELARSIAAVANGAGTKTTALLTDMNQVLASCAGNAVEVVEAINFLTGEYRNPRLYEVTMGLCAEMLVLGGIAQNEIEARTKLNTVLDNGKAAEVFGKMIAGLGGPTDFIEAYDKYLPQAKIIRPVFSDAQGYAHSMDTRELGLAVVTLGGGRRKPGDKLDYSVGLTQVCALGEQISTDKPIAMIHAQTEDDFLEAELAVKNAIKIQSSMPEKMPEIYRYIRAADL.

The protein belongs to the thymidine/pyrimidine-nucleoside phosphorylase family. Homodimer.

The enzyme catalyses thymidine + phosphate = 2-deoxy-alpha-D-ribose 1-phosphate + thymine. It functions in the pathway pyrimidine metabolism; dTMP biosynthesis via salvage pathway; dTMP from thymine: step 1/2. In terms of biological role, the enzymes which catalyze the reversible phosphorolysis of pyrimidine nucleosides are involved in the degradation of these compounds and in their utilization as carbon and energy sources, or in the rescue of pyrimidine bases for nucleotide synthesis. The polypeptide is Thymidine phosphorylase (Shewanella denitrificans (strain OS217 / ATCC BAA-1090 / DSM 15013)).